Consider the following 166-residue polypeptide: Specificity protein transcription factor 2 (166 aa).

Residues 17–45 are disordered; sequence SYHHSLPSISPPDSPASTSASSSSSSIGA. Positions 31–42 are enriched in low complexity; it reads PASTSASSSSSS. 3 C2H2-type zinc fingers span residues 77-101, 107-131, and 137-160; these read HLCSVPGCGKTYKKTSHLRAHLRKH, FVCDWFDCGKRFDRSDQLIRHKRTH, and FACKFCIRQFSRSDHLQQHLTSVH.

The protein belongs to the Sp1 C2H2-type zinc-finger protein family.

Transcription factor. Probably acts downstream of the Wnt signaling pathway. The protein is Specificity protein transcription factor 2 of Caenorhabditis elegans.